Reading from the N-terminus, the 611-residue chain is Actin-binding LIM protein 2 (611 aa).

4 LIM zinc-binding domains span residues I22–T81, T81–G141, R151–I210, and I210–E270. Zn(2+) contacts are provided by C83, C86, H103, C106, C109, C112, C131, and C134. Residues C212, C215, H232, C235, C238, C241, H260, and C263 each coordinate Zn(2+). Basic and acidic residues predominate over residues T269 to T278. Disordered stretches follow at residues T269–P295 and Y336–N527. Composition is skewed to low complexity over residues S279–P295 and S363–S372. Phosphoserine is present on residues S282, S294, S364, and S367. Residues S393–S404 are compositionally biased toward polar residues. S452 bears the Phosphoserine mark. T472 carries the post-translational modification Phosphothreonine. Positions R473–S488 are enriched in polar residues. 2 positions are modified to phosphoserine: S476 and S578. The HP domain maps to M543–F611.

As to quaternary structure, interacts with F-actin and ABRA. Highly expressed in skeletal muscle.

The protein resides in the cytoplasm. In terms of biological role, may act as scaffold protein. May stimulate ABRA activity and ABRA-dependent SRF transcriptional activity. The polypeptide is Actin-binding LIM protein 2 (ABLIM2) (Homo sapiens (Human)).